Consider the following 231-residue polypeptide: Cutinase 2 (231 aa).

A signal peptide spans 1-16; that stretch reads MKFFALTTLLAATASA. The cysteines at positions 48 and 126 are disulfide-linked. Residue Ser-137 is the Nucleophile of the active site. The cysteines at positions 188 and 195 are disulfide-linked. Residue Asp-192 is part of the active site. Catalysis depends on His-205, which acts as the Proton donor/acceptor.

The protein belongs to the cutinase family. Post-translationally, the 2 disulfide bonds play a critical role in holding the catalytic residues in juxta-position; reduction of the disulfide bridges results in the complete inactivation of the enzyme.

The protein resides in the secreted. It carries out the reaction cutin + H2O = cutin monomers.. In terms of biological role, catalyzes the hydrolysis of complex carboxylic polyesters found in the cell wall of plants. Degrades cutin, a macromolecule that forms the structure of the plant cuticle. Allows pathogenic fungi to penetrate through the cuticular barrier into the host plant during the initial stage of fungal infection. The polypeptide is Cutinase 2 (CUT2) (Fusarium vanettenii (Neocosmospora pisi)).